A 157-amino-acid chain; its full sequence is Protein AE7 (157 aa).

It belongs to the MIP18 family. Part of a complex formed of AE7, CIA1, MMS19 and NAR1. Interacts with CIA1 and MMS19, but not with NAR1. In terms of tissue distribution, expressed in the embryo, shoot apical meristem, leaf primordia, inflorescence and all floral organs.

It is found in the nucleus. Its subcellular location is the cytoplasm. In terms of biological role, central member of the cytosolic iron-sulfur (Fe-S) protein assembly (CIA) pathway. Involved in leaf polarity formation. Promotes leaf adaxial identity. May play a role in the cell cycle progression and is required for cell proliferation. In Arabidopsis thaliana (Mouse-ear cress), this protein is Protein AE7.